The chain runs to 1368 residues: DNA-directed RNA polymerase subunit beta (1368 aa).

Belongs to the RNA polymerase beta chain family. The RNAP catalytic core consists of 2 alpha, 1 beta, 1 beta' and 1 omega subunit. When a sigma factor is associated with the core the holoenzyme is formed, which can initiate transcription.

It carries out the reaction RNA(n) + a ribonucleoside 5'-triphosphate = RNA(n+1) + diphosphate. Its function is as follows. DNA-dependent RNA polymerase catalyzes the transcription of DNA into RNA using the four ribonucleoside triphosphates as substrates. The protein is DNA-directed RNA polymerase subunit beta of Burkholderia ambifaria (strain MC40-6).